A 649-amino-acid chain; its full sequence is MSEVHVYPVNQEIAATAHVNDEQYREMYQQSVINPEGFWREHGQIVDWIKPFTKVKHTSFDTGHVSVKWFEDGTLNVSANCIDRHLATRGDQPAIIWEGDDPTDDATFTYNELHEQVCKFSNALKSQGVRKGDVVCLYMPMVAEAAIAMLACTRIGAVHTIVFGGFSPEALAGRIVDSNAKLVITADEGVRAGRAVPLKKNVDDALANKNVTSIEKVIVLKRTGGNVEWHSERDVWWHEATAVASSHCEPEEMNAEDPLFILYTSGSTGKPKGVLHTTGGYLVYATMTFKYVFDYQEGDVYWCTADVGWITGHSYLVYGPLANGATTVLFEGVPNYPSTSRMSEVVDKHNVSILYTAPTAIRALMAKGTEAIKGTSRSSLRIMGSVGEPINPEAWEWYHHTIGDSRCPIVDTWWQTETGGILITPLPGATALKPGSATRPFFGVQPAIVDNMGNILEGVAEGNLVMVDSWPGQMRTLWGDHERFEQTYFSTFQGMYFTGDGARRDEDGYYWITGRVDDVLNISGHRMGTAEIESALVAFDKIAEAAIVGVPHDIKGQAIYAYITLNDGEIPSAELHKEVKDWVRKEIGPIATPDFLHWTDALPKTRSGKIMRRILRKIATGDTGSLGDTSTLADPSVVDKLIAEKQTIL.

CoA-binding positions include 191–194 (RAGR), T311, and N335. Residues 387 to 389 (GEP), 411 to 416 (DTWWQT), D500, and R515 contribute to the ATP site. S523 is a binding site for CoA. R526 provides a ligand contact to ATP. Mg(2+)-binding residues include V537, F539, and I542. R584 serves as a coordination point for CoA. N6-acetyllysine is present on K609.

This sequence belongs to the ATP-dependent AMP-binding enzyme family. Mg(2+) serves as cofactor. In terms of processing, acetylated. Deacetylation by the SIR2-homolog deacetylase activates the enzyme.

The enzyme catalyses acetate + ATP + CoA = acetyl-CoA + AMP + diphosphate. Functionally, catalyzes the conversion of acetate into acetyl-CoA (AcCoA), an essential intermediate at the junction of anabolic and catabolic pathways. AcsA undergoes a two-step reaction. In the first half reaction, AcsA combines acetate with ATP to form acetyl-adenylate (AcAMP) intermediate. In the second half reaction, it can then transfer the acetyl group from AcAMP to the sulfhydryl group of CoA, forming the product AcCoA. In Photobacterium profundum (strain SS9), this protein is Acetyl-coenzyme A synthetase.